A 653-amino-acid chain; its full sequence is Beta-galactosidase-1-like protein 3 (653 aa).

The Proton donor role is filled by Glu227. Glu301 serves as the catalytic Nucleophile.

This sequence belongs to the glycosyl hydrolase 35 family.

This is Beta-galactosidase-1-like protein 3 (GLB1L3) from Homo sapiens (Human).